The following is a 116-amino-acid chain: MNAIAEMPSPILFSDSAAAKVAELIEDEGNPDLKLRVFVQGGGCSGFQYGFTFDEIVNEDDTTMTKNGVQLLIDSMSYQYLVGAEIDYKDDLEGAQFVIKNPNATTTCGCGSSFTA.

Cys44, Cys108, and Cys110 together coordinate iron-sulfur cluster.

Belongs to the HesB/IscA family. In terms of assembly, homodimer. It depends on iron-sulfur cluster as a cofactor.

Functionally, required for insertion of 4Fe-4S clusters. This Herminiimonas arsenicoxydans protein is Putative iron-sulfur cluster insertion protein ErpA.